A 489-amino-acid chain; its full sequence is Glutamate--tRNA ligase (489 aa).

The 'HIGH' region motif lies at 12–22; that stretch reads PSPTGIPHVGM. The 'KMSKS' region signature appears at 256–260; the sequence is KLSKR. Lys259 lines the ATP pocket.

The protein belongs to the class-I aminoacyl-tRNA synthetase family. Glutamate--tRNA ligase type 1 subfamily. Monomer.

It localises to the cytoplasm. It catalyses the reaction tRNA(Glu) + L-glutamate + ATP = L-glutamyl-tRNA(Glu) + AMP + diphosphate. In terms of biological role, catalyzes the attachment of glutamate to tRNA(Glu) in a two-step reaction: glutamate is first activated by ATP to form Glu-AMP and then transferred to the acceptor end of tRNA(Glu). The protein is Glutamate--tRNA ligase of Mycobacterium ulcerans (strain Agy99).